A 461-amino-acid chain; its full sequence is Kynurenine 3-monooxygenase (461 aa).

The next 2 helical transmembrane spans lie at 395–415 (TIMNSIFPKSWIPLYSMVTFS) and 432–452 (ILSRIMTTTSTLALIGAAAGI).

This sequence belongs to the aromatic-ring hydroxylase family. KMO subfamily. It depends on FAD as a cofactor.

It localises to the mitochondrion. It is found in the membrane. The enzyme catalyses L-kynurenine + NADPH + O2 + H(+) = 3-hydroxy-L-kynurenine + NADP(+) + H2O. Its pathway is cofactor biosynthesis; NAD(+) biosynthesis; quinolinate from L-kynurenine: step 1/3. In terms of biological role, catalyzes the hydroxylation of L-kynurenine (L-Kyn) to form 3-hydroxy-L-kynurenine (L-3OHKyn). Required for synthesis of quinolinic acid. This Caenorhabditis elegans protein is Kynurenine 3-monooxygenase.